Consider the following 393-residue polypeptide: Staphopain B (393 aa).

The signal sequence occupies residues 1-36 (MNSSYKSRVFNIISIIMVSMLILSLGAFANNNKAKA). Positions 37–219 (DSHSKQLEIN…KVEENEAIQE (183 aa)) are excised as a propeptide. Active-site residues include Cys243, His340, and Asn360.

It belongs to the peptidase C47 family. As to quaternary structure, in the cytoplasm, prematurely activated/folded SspB forms a stable non-covalent complex with SspC. Proteolytically cleaved by staphylococcal serine protease (SspA).

Its subcellular location is the secreted. With respect to regulation, prematurely activated/folded staphopain B is inhibited by staphostatin B (SspC), which is probably required to protect staphylococcal cytoplasmic proteins from degradation by SspB. Cysteine protease that plays an important role in the inhibition of host innate immune response. Degrades host elastin, fibrogen, fibronectin and kininogen. Blocks phagocytosis of opsonised S.aureus by neutrophils and monocytes by inducing their death in a proteolytic activity-dependent manner. Decreases surface expression of the 'don't eat me' signal CD31 on neutrophils. Cleaves host galectin-3/LGALS3, thereby inhibiting the neutrophil-activating ability of the lectin. This chain is Staphopain B (sspB), found in Staphylococcus aureus (strain MSSA476).